Consider the following 125-residue polypeptide: Large ribosomal subunit protein uL18 (125 aa).

Glycine 2 is subject to N-acetylglycine. An N6-acetyllysine mark is found at lysine 5 and lysine 48.

Belongs to the universal ribosomal protein uL18 family. As to quaternary structure, component of the large ribosomal subunit (LSU). Part of the 5S RNP complex, which is a LSU subcomplex composed of the 5S RNA, RPL5 and RPL11. Component of a hexameric 5S RNP precursor complex, composed of 5S RNA, RRS1, RPF2/BXDC1, RPL5, RPL11 and HEATR3; this complex acts as a precursor for ribosome assembly. Interacts with NVL in an ATP-dependent manner. Interacts with RRP1B. Interacts with IPO5, IPO7 and KPNB1; these interactions may be involved in RPL5 nuclear import for the assembly of ribosomal subunits. Interacts with RRP1B.

It localises to the cytoplasm. Its subcellular location is the nucleus. The protein localises to the nucleolus. Functionally, component of the ribosome, a large ribonucleoprotein complex responsible for the synthesis of proteins in the cell. The small ribosomal subunit (SSU) binds messenger RNAs (mRNAs) and translates the encoded message by selecting cognate aminoacyl-transfer RNA (tRNA) molecules. The large subunit (LSU) contains the ribosomal catalytic site termed the peptidyl transferase center (PTC), which catalyzes the formation of peptide bonds, thereby polymerizing the amino acids delivered by tRNAs into a polypeptide chain. The nascent polypeptides leave the ribosome through a tunnel in the LSU and interact with protein factors that function in enzymatic processing, targeting, and the membrane insertion of nascent chains at the exit of the ribosomal tunnel. As part of the 5S RNP/5S ribonucleoprotein particle it is an essential component of the LSU, required for its formation and the maturation of rRNAs. It also couples ribosome biogenesis to p53/TP53 activation. As part of the 5S RNP it accumulates in the nucleoplasm and inhibits MDM2, when ribosome biogenesis is perturbed, mediating the stabilization and the activation of TP53. The chain is Large ribosomal subunit protein uL18 (RPL5) from Sus scrofa (Pig).